The primary structure comprises 299 residues: tRNA dimethylallyltransferase (299 aa).

11–18 (GPTAVGKT) is a binding site for ATP. 13 to 18 (TAVGKT) is a binding site for substrate. The tract at residues 36 to 39 (DSQQ) is interaction with substrate tRNA.

The protein belongs to the IPP transferase family. Monomer. Mg(2+) serves as cofactor.

The catalysed reaction is adenosine(37) in tRNA + dimethylallyl diphosphate = N(6)-dimethylallyladenosine(37) in tRNA + diphosphate. In terms of biological role, catalyzes the transfer of a dimethylallyl group onto the adenine at position 37 in tRNAs that read codons beginning with uridine, leading to the formation of N6-(dimethylallyl)adenosine (i(6)A). In Streptococcus pyogenes serotype M1, this protein is tRNA dimethylallyltransferase.